Reading from the N-terminus, the 208-residue chain is Phosphoheptose isomerase (208 aa).

In terms of domain architecture, SIS spans 38-200 (MALTLARGRK…LFENVLALQP (163 aa)). 53 to 55 (NGG) serves as a coordination point for substrate. Zn(2+) contacts are provided by His62 and Glu66. Residues Glu66, 95 to 96 (ND), 121 to 123 (STS), Ser126, and Gln173 each bind substrate. Zn(2+) is bound by residues Gln173 and His181.

It belongs to the SIS family. GmhA subfamily. In terms of assembly, homotetramer. Zn(2+) serves as cofactor.

The protein resides in the cytoplasm. It carries out the reaction 2 D-sedoheptulose 7-phosphate = D-glycero-alpha-D-manno-heptose 7-phosphate + D-glycero-beta-D-manno-heptose 7-phosphate. It functions in the pathway carbohydrate biosynthesis; D-glycero-D-manno-heptose 7-phosphate biosynthesis; D-glycero-alpha-D-manno-heptose 7-phosphate and D-glycero-beta-D-manno-heptose 7-phosphate from sedoheptulose 7-phosphate: step 1/1. In terms of biological role, catalyzes the isomerization of sedoheptulose 7-phosphate in D-glycero-D-manno-heptose 7-phosphate. In Nitratidesulfovibrio vulgaris (strain DSM 19637 / Miyazaki F) (Desulfovibrio vulgaris), this protein is Phosphoheptose isomerase.